A 765-amino-acid polypeptide reads, in one-letter code: Glycine--tRNA ligase (765 aa).

The N-terminal 87 residues, 1–87, are a transit peptide targeting the mitochondrion; it reads MSLQLLKALP…LRSAAAEFIM (87 aa). The disordered stretch occupies residues 41–73; the sequence is TTTKPTPSAPPPPPPTQPQQPAATTSWGTKKQN. Positions 47 to 58 are enriched in pro residues; it reads PSAPPPPPPTQP. Residues 95–151 enclose the WHEP-TRS domain; it reads QLAPLRERVQEQGNLVRDLKAKGAPEIDVKKAVAELKARKKLLEDKELALTPSVVSF. A glycine-binding site is contributed by Glu-331. ATP contacts are provided by residues 363–365 and 374–375; these read RNE and RV. Glu-382 contributes to the glycine binding site. 489-490 provides a ligand contact to ATP; that stretch reads EC. Glycine is bound at residue 609-611; the sequence is EPS. Arg-616 serves as a coordination point for ATP.

The protein belongs to the class-II aminoacyl-tRNA synthetase family. As to quaternary structure, homodimer.

The protein resides in the mitochondrion. Its subcellular location is the cytoplasm. It is found in the cell projection. It localises to the axon. The enzyme catalyses 2 ATP + H(+) = P(1),P(4)-bis(5'-adenosyl) tetraphosphate + diphosphate. The catalysed reaction is tRNA(Gly) + glycine + ATP = glycyl-tRNA(Gly) + AMP + diphosphate. Catalyzes the ATP-dependent ligation of glycine to the 3'-end of its cognate tRNA, via the formation of an aminoacyl-adenylate intermediate (Gly-AMP). Also produces diadenosine tetraphosphate (Ap4A), a universal pleiotropic signaling molecule needed for cell regulation pathways, by direct condensation of 2 ATPs. Thereby, may play a special role in Ap4A homeostasis. Required for terminal arborization of both dendrites and axons during development. The sequence is that of Glycine--tRNA ligase from Drosophila melanogaster (Fruit fly).